The sequence spans 273 residues: Vitamin B12-binding protein (273 aa).

The first 18 residues, 1–18 (MMKTLSSLLLLFSVSLQA), serve as a signal peptide directing secretion. Residues 23–273 (RVISLAPHAT…EHFASIEQKR (251 aa)) form the Fe/B12 periplasmic-binding domain. Residues Cys183 and Cys263 are joined by a disulfide bond.

The protein belongs to the BtuF family. In terms of assembly, the complex is composed of two ATP-binding proteins (BtuD), two transmembrane proteins (BtuC) and a solute-binding protein (BtuF).

The protein localises to the periplasm. Its function is as follows. Part of the ABC transporter complex BtuCDF involved in vitamin B12 import. Binds vitamin B12 and delivers it to the periplasmic surface of BtuC. The sequence is that of Vitamin B12-binding protein from Vibrio vulnificus (strain YJ016).